The chain runs to 180 residues: Stathmin-3 (180 aa).

S-palmitoyl cysteine attachment occurs at residues cysteine 22 and cysteine 24. The 143-residue stretch at 38–180 (GDMEVKQLDK…NKEQREEMSG (143 aa)) folds into the SLD domain. Serine 50, serine 60, serine 65, serine 68, serine 72, serine 73, and serine 81 each carry phosphoserine. Residues 59 to 82 (KSPSDLSPESPMLSSPPKKKDTSL) are disordered. The span at 60–74 (SPSDLSPESPMLSSP) shows a compositional bias: low complexity. Positions 76 to 179 (KKKDTSLEEL…RNKEQREEMS (104 aa)) form a coiled coil.

This sequence belongs to the stathmin family. Interacts with STAT3. Interacts with CLU (secreted form); this interaction may act as an important modulator during neuronal differentiation. Post-translationally, N-terminal palmitoylation promotes specific anchoring to the cytosolic leaflet of Golgi membranes and subsequent vesicular trafficking along dendrites and axons. Neuronal Stathmins are substrates for palmitoyltransferases ZDHHC3, ZDHHC7 and ZDHHC15.

It localises to the golgi apparatus. It is found in the cell projection. The protein localises to the growth cone. The protein resides in the axon. Its subcellular location is the cytoplasm. It localises to the cytosol. Functionally, exhibits microtubule-destabilizing activity, which is antagonized by STAT3. This Macaca fascicularis (Crab-eating macaque) protein is Stathmin-3 (STMN3).